Consider the following 202-residue polypeptide: Adenylyl-sulfate kinase (202 aa).

31 to 38 contacts ATP; it reads GLSASGKS. The active-site Phosphoserine intermediate is serine 105.

This sequence belongs to the APS kinase family.

The enzyme catalyses adenosine 5'-phosphosulfate + ATP = 3'-phosphoadenylyl sulfate + ADP + H(+). The protein operates within sulfur metabolism; hydrogen sulfide biosynthesis; sulfite from sulfate: step 2/3. Catalyzes the synthesis of activated sulfate. In Saccharomyces pastorianus (Lager yeast), this protein is Adenylyl-sulfate kinase (MET14).